Reading from the N-terminus, the 1360-residue chain is Probable inactive protein kinase DDB_G0270444 (1360 aa).

WD repeat units follow at residues 44-83 (SSKR…IKQL), 109-152 (IRNI…AVYN), 166-205 (TTSA…IMGT), and 208-247 (GHSR…QITG). The region spanning 636–954 (EKSIQTYLSN…IEQALSHPFI (319 aa)) is the Protein kinase domain. Over residues 959-979 (KQQQQQQQQKQQQQQQQQQQQ) the composition is skewed to low complexity. Disordered stretches follow at residues 959–989 (KQQQ…DSLT), 1258–1311 (IISE…VEEE), and 1331–1360 (EVEE…SNDF). 2 coiled-coil regions span residues 1014–1269 (SKIK…QEGE) and 1297–1352 (NASD…QVED). Residues 1291-1300 (LERDNKNASD) are compositionally biased toward basic and acidic residues. Acidic residues-rich tracts occupy residues 1301–1311 (HDDEQQFVEEE) and 1331–1354 (EVEE…EDDT).

This sequence belongs to the protein kinase superfamily. CMGC Ser/Thr protein kinase family.

In Dictyostelium discoideum (Social amoeba), this protein is Probable inactive protein kinase DDB_G0270444.